We begin with the raw amino-acid sequence, 440 residues long: Transposon Ty1-JR2 Gag polyprotein (440 aa).

Residues 1–16 (MESQQLSQHSHISHGS) are compositionally biased toward low complexity. 3 disordered regions span residues 1-93 (MESQ…MMTQ), 126-173 (PQSQ…RPPP), and 352-440 (GSRN…PETY). Composition is skewed to polar residues over residues 48–60 (TKAN…TPAS), 71–93 (SPQT…MMTQ), and 127–152 (QSQF…GNTF). Over residues 153–165 (TDSSSADSDMTST) the composition is skewed to low complexity. Residues 299–401 (NNGIHINNKV…NSKSKTARAH (103 aa)) are RNA-binding. Low complexity predominate over residues 402 to 418 (NVSTSNNSPSTDNDSIS). A Phosphoserine modification is found at serine 416. Positions 419-428 (KSTTEPIQLN) are enriched in polar residues. A compositionally biased stretch (basic and acidic residues) spans 429-440 (NKHDLHLRPETY).

Homotrimer.

The protein localises to the cytoplasm. Capsid protein (CA) is the structural component of the virus-like particle (VLP), forming the shell that encapsulates the retrotransposons dimeric RNA genome. The particles are assembled from trimer-clustered units and there are holes in the capsid shells that allow for the diffusion of macromolecules. CA also has nucleocapsid-like chaperone activity, promoting primer tRNA(i)-Met annealing to the multipartite primer-binding site (PBS), dimerization of Ty1 RNA and initiation of reverse transcription. The chain is Transposon Ty1-JR2 Gag polyprotein (TY1A-JR2) from Saccharomyces cerevisiae (strain ATCC 204508 / S288c) (Baker's yeast).